The following is a 157-amino-acid chain: UPF0225 protein PSPTO_4127 (157 aa).

It belongs to the UPF0225 family.

This Pseudomonas syringae pv. tomato (strain ATCC BAA-871 / DC3000) protein is UPF0225 protein PSPTO_4127.